A 169-amino-acid chain; its full sequence is Tumor suppressor ARF (169 aa).

Residues 1-63 (MGRRFLVTVR…RRGPHRNPGP (63 aa)) form an interaction with CDK5RAP3 and MDM2 region. A disordered region spans residues 54–73 (RRGPHRNPGPGDDDGQRSRS).

As to quaternary structure, does not interact with cyclins, CDK1, CDK2, CDK4, CDK5 or CDK6. Interacts with COMMD1. Binds to BCL6, E2F1, HUWE1, MDM2, MYC, NPM1/B23, TOP1/TOPOI and UBE2I/UBC9. Interacts with TBRG1. Interacts with CDKN2AIP and E4F1. Interacts with CDK5RAP3 and MDM2; form a ternary complex involved in regulation of p53/TP53. Interacts with NOP53; the interaction is direct and promotes ARF nucleoplasmic relocalization and ubiquitin-mediated proteasomal degradation. Interacts with TTF1 (via the N-terminal region (NRD) and a C-terminal region); the interaction is direct and inhibits the nucleolar localization of TTF1. In terms of assembly, interacts with C1QBP. In terms of processing, ubiquitinated in normal cells by TRIP12 via the ubiquitin fusion degradation (UFD) pathway, a process that mediates ubiquitination at the N-terminus, regardless of the absence of lysine residues. Ubiquitination leads to its proteasomal degradation. In cancer cells, however, TRIP12 is located in a different cell compartment, preventing ubiquitination and degradation.

Its subcellular location is the nucleus. It is found in the nucleolus. The protein localises to the nucleoplasm. It localises to the mitochondrion. Capable of inducing cell cycle arrest in G1 and G2 phases. Acts as a tumor suppressor. Binds to MDM2 and blocks its nucleocytoplasmic shuttling by sequestering it in the nucleolus. This inhibits the oncogenic action of MDM2 by blocking MDM2-induced degradation of p53 and enhancing p53-dependent transactivation and apoptosis. Also induces G2 arrest and apoptosis in a p53-independent manner by preventing the activation of cyclin B1/CDC2 complexes. Binds to BCL6 and down-regulates BCL6-induced transcriptional repression. Binds to E2F1 and MYC and blocks their transcriptional activator activity but has no effect on MYC transcriptional repression. Binds to TOP1/TOPOI and stimulates its activity. This complex binds to rRNA gene promoters and may play a role in rRNA transcription and/or maturation. Interacts with NPM1/B23 and promotes its polyubiquitination and degradation, thus inhibiting rRNA processing. Plays a role in inhibiting ribosome biogenesis, perhaps by binding to the nucleolar localization sequence of transcription termination factor TTF1, and thereby preventing nucleolar localization of TTF1. Interacts with COMMD1 and promotes its 'Lys63'-linked polyubiquitination. Interacts with UBE2I/UBC9 and enhances sumoylation of a number of its binding partners including MDM2 and E2F1. Binds to HUWE1 and represses its ubiquitin ligase activity. May play a role in controlling cell proliferation and apoptosis during mammary gland development. Its function is as follows. May be involved in regulation of autophagy and caspase-independent cell death; the short-lived mitochondrial isoform is stabilized by C1QBP. The chain is Tumor suppressor ARF from Mus musculus (Mouse).